A 715-amino-acid chain; its full sequence is Phosphoribosylformylglycinamidine synthase subunit PurL (715 aa).

Histidine 33 is an active-site residue. Tyrosine 36 is a binding site for ATP. Glutamate 77 is a binding site for Mg(2+). Substrate contacts are provided by residues 78–81 (SHNH) and arginine 100. The active-site Proton acceptor is the histidine 79. Residue aspartate 101 coordinates Mg(2+). Position 225 (glutamine 225) interacts with substrate. Residue aspartate 253 coordinates Mg(2+). Substrate is bound at residue 297–299 (ESQ). ATP-binding residues include asparagine 476 and glycine 513. Asparagine 514 contacts Mg(2+). Serine 516 serves as a coordination point for substrate.

The protein belongs to the FGAMS family. As to quaternary structure, monomer. Part of the FGAM synthase complex composed of 1 PurL, 1 PurQ and 2 PurS subunits.

It localises to the cytoplasm. The catalysed reaction is N(2)-formyl-N(1)-(5-phospho-beta-D-ribosyl)glycinamide + L-glutamine + ATP + H2O = 2-formamido-N(1)-(5-O-phospho-beta-D-ribosyl)acetamidine + L-glutamate + ADP + phosphate + H(+). It participates in purine metabolism; IMP biosynthesis via de novo pathway; 5-amino-1-(5-phospho-D-ribosyl)imidazole from N(2)-formyl-N(1)-(5-phospho-D-ribosyl)glycinamide: step 1/2. In terms of biological role, part of the phosphoribosylformylglycinamidine synthase complex involved in the purines biosynthetic pathway. Catalyzes the ATP-dependent conversion of formylglycinamide ribonucleotide (FGAR) and glutamine to yield formylglycinamidine ribonucleotide (FGAM) and glutamate. The FGAM synthase complex is composed of three subunits. PurQ produces an ammonia molecule by converting glutamine to glutamate. PurL transfers the ammonia molecule to FGAR to form FGAM in an ATP-dependent manner. PurS interacts with PurQ and PurL and is thought to assist in the transfer of the ammonia molecule from PurQ to PurL. The chain is Phosphoribosylformylglycinamidine synthase subunit PurL from Methanosarcina barkeri (strain Fusaro / DSM 804).